The primary structure comprises 440 residues: Proline--tRNA ligase (440 aa).

This sequence belongs to the class-II aminoacyl-tRNA synthetase family. ProS type 2 subfamily. Homodimer.

It is found in the cytoplasm. The catalysed reaction is tRNA(Pro) + L-proline + ATP = L-prolyl-tRNA(Pro) + AMP + diphosphate. Catalyzes the attachment of proline to tRNA(Pro) in a two-step reaction: proline is first activated by ATP to form Pro-AMP and then transferred to the acceptor end of tRNA(Pro). The polypeptide is Proline--tRNA ligase (Rhizobium etli (strain ATCC 51251 / DSM 11541 / JCM 21823 / NBRC 15573 / CFN 42)).